The primary structure comprises 154 residues: MKSRTGALPSRKQIALIAHDNKKQELSDWVCTHKKELEQHDLFATGTTGYKLAAETGLKVEKYISGPLGGDQQIGAKISTGEIDVLIFFWDPFEPMPHDPDVKALLRIAAVWNIPVACNPASADFVITSPLIKQSYERQIPDYEAYIAERTKKL.

An MGS-like domain is found at 6–154 (GALPSRKQIA…AYIAERTKKL (149 aa)). Substrate is bound by residues His-19, Lys-23, 45-48 (TGTT), and 65-66 (SG). The active-site Proton donor/acceptor is Asp-71. A substrate-binding site is contributed by His-98.

It belongs to the methylglyoxal synthase family.

It catalyses the reaction dihydroxyacetone phosphate = methylglyoxal + phosphate. Its function is as follows. Catalyzes the formation of methylglyoxal from dihydroxyacetone phosphate. The chain is Methylglyoxal synthase from Saccharophagus degradans (strain 2-40 / ATCC 43961 / DSM 17024).